The sequence spans 335 residues: Pyridoxal 5'-phosphate synthase subunit PdxS (335 aa).

Asp-30 contacts D-ribose 5-phosphate. The active-site Schiff-base intermediate with D-ribose 5-phosphate is the Lys-87. Gly-159 is a D-ribose 5-phosphate binding site. Residue Arg-171 coordinates D-glyceraldehyde 3-phosphate. Residues Gly-257 and 278-279 (GS) each bind D-ribose 5-phosphate.

It belongs to the PdxS/SNZ family. As to quaternary structure, in the presence of PdxT, forms a dodecamer of heterodimers.

It catalyses the reaction aldehydo-D-ribose 5-phosphate + D-glyceraldehyde 3-phosphate + L-glutamine = pyridoxal 5'-phosphate + L-glutamate + phosphate + 3 H2O + H(+). It functions in the pathway cofactor biosynthesis; pyridoxal 5'-phosphate biosynthesis. Functionally, catalyzes the formation of pyridoxal 5'-phosphate from ribose 5-phosphate (RBP), glyceraldehyde 3-phosphate (G3P) and ammonia. The ammonia is provided by the PdxT subunit. Can also use ribulose 5-phosphate and dihydroxyacetone phosphate as substrates, resulting from enzyme-catalyzed isomerization of RBP and G3P, respectively. In Pyrococcus furiosus (strain ATCC 43587 / DSM 3638 / JCM 8422 / Vc1), this protein is Pyridoxal 5'-phosphate synthase subunit PdxS.